We begin with the raw amino-acid sequence, 384 residues long: uncharacterized protein (384 aa).

This is an uncharacterized protein from Methanocaldococcus jannaschii (strain ATCC 43067 / DSM 2661 / JAL-1 / JCM 10045 / NBRC 100440) (Methanococcus jannaschii).